The sequence spans 723 residues: Heme/hemopexin utilization protein C (723 aa).

Positions 1-21 are cleaved as a signal peptide; it reads MRFSKLSLAITTTLVTANALA. Positions 36–147 constitute a TBDR plug domain; it reads DPSRFAYTPE…LGGVVAMRTP (112 aa). In terms of domain architecture, TBDR beta-barrel spans 158 to 723; the sequence is KFGVKIRQGY…NAKISAVYSF (566 aa). Positions 706–723 match the TonB C-terminal box motif; it reads SLMEGTGRNAKISAVYSF.

Belongs to the TonB-dependent receptor family.

The protein localises to the cell outer membrane. Functionally, required for utilization of free heme at low concentrations. The protein is Heme/hemopexin utilization protein C (hxuC) of Haemophilus influenzae (strain ATCC 51907 / DSM 11121 / KW20 / Rd).